Reading from the N-terminus, the 442-residue chain is Mimosinase, chloroplastic (442 aa).

Residues 1 to 35 (MALPSAFLNPFVPSPVTANPRTKFARVGKGFNVSC) constitute a chloroplast transit peptide. Positions 103, 105, 133, 134, 252, and 254 each coordinate pyridoxal 5'-phosphate. K255 carries the N6-(pyridoxal phosphate)lysine modification.

The protein belongs to the trans-sulfuration enzymes family. As to quaternary structure, forms homodimers. May form homotetramers from two homodimers. It depends on pyridoxal 5'-phosphate as a cofactor.

Its subcellular location is the plastid. It localises to the chloroplast. It carries out the reaction L-mimosine + H2O = 3-hydroxy-4H-pyrid-4-one + pyruvate + NH4(+). The catalysed reaction is L,L-cystathionine + H2O = L-homocysteine + pyruvate + NH4(+). The enzyme catalyses an S-substituted L-cysteine + H2O = a thiol + pyruvate + NH4(+). Catalyzes the degradation of mimosine, which is a toxic secondary metabolite found in all Mimosa and Leucaena species. Catalyzes the degradation of cystathionine, but seems to have lower preference toward cystathionine over mimosine. This chain is Mimosinase, chloroplastic, found in Mimosa pudica (Sensitive plant).